A 323-amino-acid chain; its full sequence is Pseudouridine-5'-phosphate glycosidase (323 aa).

Glutamate 43 (proton donor) is an active-site residue. Substrate-binding residues include lysine 104 and valine 124. Aspartate 156 is a binding site for Mn(2+). 158–160 (SAD) contacts substrate. Residue lysine 177 is the Nucleophile of the active site.

This sequence belongs to the pseudouridine-5'-phosphate glycosidase family. In terms of assembly, homotrimer. Mn(2+) is required as a cofactor.

It carries out the reaction D-ribose 5-phosphate + uracil = psi-UMP + H2O. Catalyzes the reversible cleavage of pseudouridine 5'-phosphate (PsiMP) to ribose 5-phosphate and uracil. Functions biologically in the cleavage direction, as part of a pseudouridine degradation pathway. This Streptomyces griseus subsp. griseus (strain JCM 4626 / CBS 651.72 / NBRC 13350 / KCC S-0626 / ISP 5235) protein is Pseudouridine-5'-phosphate glycosidase.